A 384-amino-acid chain; its full sequence is NADP-dependent alcohol dehydrogenase 3 (384 aa).

This sequence belongs to the iron-containing alcohol dehydrogenase family.

It catalyses the reaction a primary alcohol + NADP(+) = an aldehyde + NADPH + H(+). Functionally, has NADP-dependent alcohol dehydrogenase activity. This is NADP-dependent alcohol dehydrogenase 3 from Entamoeba histolytica (strain ATCC 30459 / HM-1:IMSS / ABRM).